The chain runs to 419 residues: UDP-N-acetylglucosamine 1-carboxyvinyltransferase (419 aa).

22 to 23 (KN) lines the phosphoenolpyruvate pocket. UDP-N-acetyl-alpha-D-glucosamine is bound at residue Arg-91. Cys-115 functions as the Proton donor in the catalytic mechanism. Cys-115 carries the 2-(S-cysteinyl)pyruvic acid O-phosphothioketal modification. UDP-N-acetyl-alpha-D-glucosamine-binding positions include 120-124 (RPVDL), 160-163 (KVSV), Asp-305, and Val-327.

This sequence belongs to the EPSP synthase family. MurA subfamily.

It is found in the cytoplasm. It carries out the reaction phosphoenolpyruvate + UDP-N-acetyl-alpha-D-glucosamine = UDP-N-acetyl-3-O-(1-carboxyvinyl)-alpha-D-glucosamine + phosphate. It participates in cell wall biogenesis; peptidoglycan biosynthesis. In terms of biological role, cell wall formation. Adds enolpyruvyl to UDP-N-acetylglucosamine. The sequence is that of UDP-N-acetylglucosamine 1-carboxyvinyltransferase from Escherichia fergusonii (strain ATCC 35469 / DSM 13698 / CCUG 18766 / IAM 14443 / JCM 21226 / LMG 7866 / NBRC 102419 / NCTC 12128 / CDC 0568-73).